Here is a 281-residue protein sequence, read N- to C-terminus: Probable endonuclease 4 (281 aa).

Zn(2+)-binding residues include histidine 69, histidine 109, glutamate 145, aspartate 179, histidine 182, histidine 216, aspartate 229, histidine 231, and glutamate 261.

It belongs to the AP endonuclease 2 family. The cofactor is Zn(2+).

The catalysed reaction is Endonucleolytic cleavage to 5'-phosphooligonucleotide end-products.. Its function is as follows. Endonuclease IV plays a role in DNA repair. It cleaves phosphodiester bonds at apurinic or apyrimidinic (AP) sites, generating a 3'-hydroxyl group and a 5'-terminal sugar phosphate. The polypeptide is Probable endonuclease 4 (Chlorobaculum parvum (strain DSM 263 / NCIMB 8327) (Chlorobium vibrioforme subsp. thiosulfatophilum)).